The primary structure comprises 510 residues: Facilitated glucose transporter protein 1 (510 aa).

The tract at residues 1–29 is disordered; it reads MSEKSRSDTSATASLSDSSKSPSSYSTPG. Over 1–46 the chain is Cytoplasmic; sequence MSEKSRSDTSATASLSDSSKSPSSYSTPGTTTQKIIFPDGKLTKCL. Residues 8-29 are compositionally biased toward low complexity; the sequence is DTSATASLSDSSKSPSSYSTPG. The helical transmembrane segment at 47–67 threads the bilayer; the sequence is AFSAFVITLASFQFGYHIGCV. The Extracellular segment spans residues 68–100; that stretch reads NAPGGLITEWIIGSHKDLFDKELSRENADLAWS. The helical transmembrane segment at 101-121 threads the bilayer; it reads VAVSVFAVGGMIGGLSSGWLA. At 122–127 the chain is on the cytoplasmic side; sequence DKVGRR. The helical transmembrane segment at 128–146 threads the bilayer; the sequence is GALFYNNLLALAAAALMGL. Residues 147 to 160 lie on the Extracellular side of the membrane; the sequence is AKSVGAYPMVILGR. Residues 161 to 181 form a helical membrane-spanning segment; the sequence is LIIGLNCGFSSALVPMFLTEI. At 182-195 the chain is on the cytoplasmic side; it reads SPNNLRGMLGSLHQ. Gln195 provides a ligand contact to D-glucose. A helical transmembrane segment spans residues 196–216; the sequence is LLVTIAILVSQIFGLPHLLGT. Residues 217 to 219 lie on the Extracellular side of the membrane; sequence GDR. A helical membrane pass occupies residues 220–240; sequence WPLIFAFTVVPAVLQLALLML. Residues 241–299 are Cytoplasmic-facing; sequence CPESPKYTMAVRGQRNEAESALKKLRDTEDVSTEIEAMQEEATAAGVQEKPKMGDMFKG. The chain crosses the membrane as a helical span at residues 300–320; it reads ALLWPMSIAIMMMLAQQLSGI. Residues 315-316, Asn321, and Asn352 each bind D-glucose; that span reads QQ. Over 321 to 341 the chain is Extracellular; it reads NVAMFYSTVIFRGAGLTGNEP. Residues 342–362 form a helical membrane-spanning segment; that stretch reads FYATIGMGAVNVIMTLISVWL. The Cytoplasmic segment spans residues 363–373; that stretch reads VDHPKFGRRSL. A helical membrane pass occupies residues 374-394; it reads LLAGLTGMFVSTLLLVGALTI. The Extracellular segment spans residues 395–409; that stretch reads QNSGGDKWASYSAIG. The helical transmembrane segment at 410–430 threads the bilayer; the sequence is FVLLFVISFATGPGAIPWFFV. Trp427 provides a ligand contact to D-glucose. Residues 431–445 are Cytoplasmic-facing; that stretch reads SEIFDSSARGNANSI. Residues 446 to 464 traverse the membrane as a helical segment; sequence AVMVNWAANLLVGLTFLPI. Residues 465–470 are Extracellular-facing; the sequence is NNLMQQ. The helical transmembrane segment at 471 to 491 threads the bilayer; that stretch reads YSFFIFSGFLAFFIFYTWKFV. The Cytoplasmic segment spans residues 492–510; sequence PETKGKSIEQIQAEFEKRK.

Belongs to the major facilitator superfamily. Sugar transporter (TC 2.A.1.1) family. Glucose transporter subfamily. As to expression, isoform a is expressed in pharyngeal muscle and intestinal cells in both embryos and adults (at protein level).

Its subcellular location is the cell membrane. The protein localises to the basolateral cell membrane. Functionally, facilitative glucose transporter that plays a role in glucose metabolism and regulation of longevity. May also play a role in lipid metabolism. Glucose transport activity of isoform a is competitively inhibited by mannose, galactose and fructose, suggesting ability to transport also other hexose sugars. This is Facilitated glucose transporter protein 1 from Caenorhabditis elegans.